A 200-amino-acid chain; its full sequence is Pyridoxal 5'-phosphate synthase subunit PdxT (200 aa).

46-48 contacts L-glutamine; sequence GES. Residue Cys-78 is the Nucleophile of the active site. Residues Arg-107 and 138 to 139 each bind L-glutamine; that span reads IR. Residues His-175 and Glu-177 each act as charge relay system in the active site.

This sequence belongs to the glutaminase PdxT/SNO family. In terms of assembly, in the presence of PdxS, forms a dodecamer of heterodimers. Only shows activity in the heterodimer.

It catalyses the reaction aldehydo-D-ribose 5-phosphate + D-glyceraldehyde 3-phosphate + L-glutamine = pyridoxal 5'-phosphate + L-glutamate + phosphate + 3 H2O + H(+). The enzyme catalyses L-glutamine + H2O = L-glutamate + NH4(+). It participates in cofactor biosynthesis; pyridoxal 5'-phosphate biosynthesis. Functionally, catalyzes the hydrolysis of glutamine to glutamate and ammonia as part of the biosynthesis of pyridoxal 5'-phosphate. The resulting ammonia molecule is channeled to the active site of PdxS. In Corynebacterium glutamicum (strain ATCC 13032 / DSM 20300 / JCM 1318 / BCRC 11384 / CCUG 27702 / LMG 3730 / NBRC 12168 / NCIMB 10025 / NRRL B-2784 / 534), this protein is Pyridoxal 5'-phosphate synthase subunit PdxT.